A 305-amino-acid polypeptide reads, in one-letter code: MNDLMTKSFLSYVELKKQARTDMESDRDLEKGEDFNFDFSPADEENLSGFFQEIETIKTLIEEITHLLLDLQNLNEETKSTHSTKILRGLRDRMESNIVTISRKANTVKTLIETLEKRNVANRTSFKEGSCVDRTRTSITNGVRKKLRDTMSEFHRLRERIFADYREDLKRKYFLATGEEPSNEDMEKMISGSGSCSDLVKTFEVKPEMDLKTKERHEAVNDIKRSLNRLHQVFLDMAVLVETQGDRIDDIEANVANAGSFVSGGTNSLYYANQMKKKTKSWVLWVSILGVLILLVCVISMLASR.

Methionine 1 is modified (N-acetylmethionine). Residues 52 to 119 (QEIETIKTLI…TLIETLEKRN (68 aa)) adopt a coiled-coil conformation. A t-SNARE coiled-coil homology domain is found at 210–272 (DLKTKERHEA…SGGTNSLYYA (63 aa)).

It belongs to the syntaxin family. In terms of assembly, part of the t-SNARE complex.

Functionally, vesicle trafficking protein that functions in the secretory pathway. This Arabidopsis thaliana (Mouse-ear cress) protein is Syntaxin-112 (SYP112).